The following is a 257-amino-acid chain: Beta-fibrinogenase (257 aa).

An N-terminal signal peptide occupies residues M1–A18. A propeptide spanning residues Q19–L24 is cleaved from the precursor. One can recognise a Peptidase S1 domain in the interval V25–A248. Disulfide bonds link C31–C162, C49–C65, C97–C255, C141–C209, C173–C188, and C199–C224. N44 is a glycosylation site (N-linked (GlcNAc...) asparagine). The active-site Charge relay system is H64. N-linked (GlcNAc...) asparagine glycosylation is found at N78 and N102. The active-site Charge relay system is the D109. N153 and N169 each carry an N-linked (GlcNAc...) asparagine glycan. S203 functions as the Charge relay system in the catalytic mechanism. N250 carries an N-linked (GlcNAc...) asparagine glycan.

Monomer. Post-translationally, glycosylated. Contains 23.0% of hexoses, 8.3% of hexosamines and 1.0% of sialic acids. As to expression, expressed by the venom gland.

It is found in the secreted. Its activity is regulated as follows. Inhibited by diisopropylfluorophosphate (DFP) and PMSF. Its function is as follows. Snake venom serine protease that has fibrinogenolytic activities by hydrolyzing the beta chain of fibrinogen (FGB). Typical arginine esterase which hydrolyzes esters and amides of arginine. The polypeptide is Beta-fibrinogenase (Macrovipera lebetinus (Levantine viper)).